We begin with the raw amino-acid sequence, 322 residues long: Arginase-1 (322 aa).

The tract at residues 1 to 27 (MSSKPQSIGVIGAPFSKGQPRGGVEEG) is disordered. At serine 7 the chain carries Phosphoserine. The residue at position 17 (lysine 17) is an N6-succinyllysine. Serine 62 bears the Phosphoserine mark. Lysine 75 carries the N6-succinyllysine modification. Residues histidine 101, aspartate 124, histidine 126, and aspartate 128 each coordinate Mn(2+). Residues 126–130 (HTDIN), 137–139 (TGN), and aspartate 183 each bind substrate. A Phosphoserine modification is found at serine 217. Residues aspartate 232 and aspartate 234 each contribute to the Mn(2+) site. Substrate is bound by residues threonine 246 and glutamate 277.

It belongs to the arginase family. Homotrimer. Interacts with CMTM6. The cofactor is Mn(2+).

The protein resides in the cytoplasm. The catalysed reaction is L-arginine + H2O = urea + L-ornithine. The protein operates within nitrogen metabolism; urea cycle; L-ornithine and urea from L-arginine: step 1/1. The sequence is that of Arginase-1 (ARG1) from Bos taurus (Bovine).